Here is a 1310-residue protein sequence, read N- to C-terminus: Zinc finger protein 521 (1310 aa).

The span at 1–10 shows a compositional bias: basic residues; sequence MSRRKQAKPR. Residues 1 to 46 are disordered; it reads MSRRKQAKPRSLKDPNCKLEDTSEDGESPDCKKRQEEGDELEEEEA. The segment covering 11–21 has biased composition (basic and acidic residues); the sequence is SLKDPNCKLED. The C2H2-type 1; degenerate zinc finger occupies 48-68; the sequence is HSCDSCLQVFESLSDITEHKI. The disordered stretch occupies residues 82–106; that stretch reads DPTCSWPASSPSSKDQASPIHGEGF. Polar residues predominate over residues 87–97; sequence WPASSPSSKDQ. 7 consecutive C2H2-type zinc fingers follow at residues 119 to 141, 147 to 169, 175 to 197, 203 to 225, 247 to 270, 282 to 305, and 311 to 333; these read YPCQ…EQSH, FKCT…IKLH, YHCS…LKTH, YKCA…MQVH, QKCS…AECH, LQCM…EQIH, and NSCN…MDSH. The C2H2-type 9; degenerate zinc-finger motif lies at 404 to 428; the sequence is YSCIYCSKQLFSSLAVLQIHLKTMH. 3 C2H2-type zinc fingers span residues 436-459, 476-499, and 512-535; these read HICQ…KQVH, YQCN…RSSH, and FFCP…RQVH. Residues 559-584 form a C2H2-type 13; atypical zinc finger; the sequence is YSCSYCTNSPIFNSVLKLNKHIKENH. 7 consecutive C2H2-type zinc fingers follow at residues 633-655, 663-685, 693-716, 721-744, 751-774, 782-804, and 808-831; these read YICN…LKTH, LTCP…VTIH, YICE…LDMH, FRCT…AVKH, YRCT…KHNH, HKCI…ITTH, and YNCK…REKH. The segment at 885–907 adopts a C2H2-type 21; degenerate zinc-finger fold; it reads YGCDICGAAYTMESLLQNHQLRD. 3 C2H2-type zinc fingers span residues 929–951, 958–980, and 1019–1041; these read YKCN…MQTH, YMCP…KVTH, and FRCV…GTFH. The segment at 1064–1082 adopts a C2H2-type 25; degenerate zinc-finger fold; it reads YKCASCLKEFRSKQDLVKL. 5 consecutive C2H2-type zinc fingers follow at residues 1138–1161, 1194–1216, 1224–1246, 1255–1278, and 1285–1308; these read TRCS…QTIH, YQCI…VANH, HECK…LIEH, FKCP…FSAH, and YDCA…MSQH.

Belongs to the krueppel C2H2-type zinc-finger protein family.

It localises to the nucleus. Its function is as follows. Transcription factor that can both act as an activator or a repressor depending on the context. Involved in BMP signaling and in the regulation of the immature compartment of the hematopoietic system. The protein is Zinc finger protein 521 (znf521) of Xenopus laevis (African clawed frog).